The following is a 391-amino-acid chain: Tumor susceptibility gene 101 protein (391 aa).

Ala2 is modified (N-acetylalanine). The region spanning 2 to 145 (AVSESQLKKM…GEEPPVFSRP (144 aa)) is the UEV domain. The interaction with CEP55 stretch occupies residues 159–163 (PPNTS). The interval 195–222 (GPYPATTSSQYPSQPPVTTAGPSRDGTI) is disordered. Polar residues predominate over residues 200–215 (TTSSQYPSQPPVTTAG). Thr221 carries the post-translational modification Phosphothreonine. Positions 238–317 (KLRWRMKEEM…NQSENNDIDE (80 aa)) form a coiled coil. Residues 321-324 (PTAP) carry the PTAP motif motif. Positions 323–391 (APLYKQILNL…RKTAGLSDLY (69 aa)) constitute an SB domain.

It belongs to the ubiquitin-conjugating enzyme family. UEV subfamily. Component of the ESCRT-I complex (endosomal sorting complex required for transport I) which consists of TSG101, VPS28, a VPS37 protein (VPS37A to -D) and MVB12A or MVB12B in a 1:1:1:1 stoichiometry. Interacts with VPS37A, VPS37B and VPS37C. Interacts with DMAP1. Interacts with ubiquitin. Interacts with AATF. Interacts with stathmin and GMCL. Component of an ESCRT-I complex (endosomal sorting complex required for transport I) which consists of TSG101, VPS28, VPS37A and UBAP1 in a 1:1:1:1 stoichiometry. Interacts with HGS; the interaction mediates the association with the ESCRT-0 complex. Interacts with GGA1 and GGA3. Interacts (via UEV domain) with PDCD6IP/AIP1. Interacts with VPS28, SNF8 and VPS36. Self-associates. Interacts with MVB12A; the association appears to be mediated by the TSG101-VPS37 binary subcomplex. Interacts with VPS37D. Interacts with LRSAM1. Interacts with CEP55; the interaction is required for cytokinesis. Interacts with PDCD6. Interacts with LITAF. Interacts with MGRN1. Interacts with ARRDC1; recruits TSG101 to the plasma membrane. In terms of processing, monoubiquitinated at multiple sites by LRSAM1 and by MGRN1. Ubiquitination inactivates it, possibly by regulating its shuttling between an active membrane-bound protein and an inactive soluble form. Ubiquitination by MGRN1 requires the presence of UBE2D1.

Its subcellular location is the cytoplasm. It localises to the early endosome membrane. The protein localises to the late endosome membrane. It is found in the cytoskeleton. The protein resides in the microtubule organizing center. Its subcellular location is the centrosome. It localises to the midbody. The protein localises to the midbody ring. It is found in the nucleus. Functionally, component of the ESCRT-I complex, a regulator of vesicular trafficking process. Binds to ubiquitinated cargo proteins and is required for the sorting of endocytic ubiquitinated cargos into multivesicular bodies (MVBs). Mediates the association between the ESCRT-0 and ESCRT-I complex. Required for completion of cytokinesis; the function requires CEP55. May be involved in cell growth and differentiation. Acts as a negative growth regulator. Required for the exosomal release of SDCBP, CD63 and syndecan. It may also play a role in the extracellular release of microvesicles that differ from the exosomes. This chain is Tumor susceptibility gene 101 protein (Tsg101), found in Rattus norvegicus (Rat).